Reading from the N-terminus, the 385-residue chain is Branched-chain-amino-acid aminotransferase, cytosolic (385 aa).

At K221 the chain carries N6-(pyridoxal phosphate)lysine.

This sequence belongs to the class-IV pyridoxal-phosphate-dependent aminotransferase family. As to quaternary structure, homodimer. The cofactor is pyridoxal 5'-phosphate. As to expression, expressed in muscles.

Its subcellular location is the cytoplasm. The catalysed reaction is L-leucine + 2-oxoglutarate = 4-methyl-2-oxopentanoate + L-glutamate. It carries out the reaction L-isoleucine + 2-oxoglutarate = (S)-3-methyl-2-oxopentanoate + L-glutamate. It catalyses the reaction L-valine + 2-oxoglutarate = 3-methyl-2-oxobutanoate + L-glutamate. Its function is as follows. Catalyzes the first reaction in the catabolism of the essential branched chain amino acids leucine, isoleucine, and valine. In Ovis aries (Sheep), this protein is Branched-chain-amino-acid aminotransferase, cytosolic (BCAT1).